An 83-amino-acid chain; its full sequence is MFNLFLTDTVWYVGQIIFIFAVCLMVTIIVVAFLASIKLCIQLCGLCNTLVLSPSIYLYDRSKQLYKYYNEEMRLPLLEVDDI.

Residues 1–16 (MFNLFLTDTVWYVGQI) are Virion surface-facing. The chain crosses the membrane as a helical span at residues 17–37 (IFIFAVCLMVTIIVVAFLASI). At 38–79 (KLCIQLCGLCNTLVLSPSIYLYDRSKQLYKYYNEEMRLPLLE) the chain is on the intravirion side.

The protein belongs to the betacoronaviruses E protein family. As to quaternary structure, homopentamer. Interacts with membrane protein M in the budding compartment of the host cell, which is located between endoplasmic reticulum and the Golgi complex. Interacts with Nucleoprotein.

The protein resides in the host Golgi apparatus membrane. In terms of biological role, component of the viral envelope that plays a central role in virus morphogenesis and assembly. It is sufficient to form virus-like particles. Seems to be important for creating the membrane curvature needed to acquire the rounded, stable and infectious particle phenotype. Acts as a viroporin, inducing the formation of hydrophilic pores in cellular membranes. Also induces apoptosis. Plays a central role in virus morphogenesis and assembly. Acts as a viroporin and self-assembles in host membranes forming pentameric protein-lipid pores that allow ion transport. Also plays a role in the induction of apoptosis. This chain is Envelope small membrane protein, found in Mus musculus (Mouse).